Here is a 720-residue protein sequence, read N- to C-terminus: Calpain-12 (720 aa).

Residues 45–341 (LFRDPCFPAG…FNTVQICSLS (297 aa)) form the Calpain catalytic domain. Catalysis depends on residues Cys-105, His-259, and Asn-283. A domain III region spans residues 342-541 (PEVLGPSPAG…DDVISADLDA (200 aa)). Residues 393–403 (DEEEDDDDEEG) show a composition bias toward acidic residues. A disordered region spans residues 393-415 (DEEEDDDDEEGPWGGWGAAGARG). Residues 542 to 720 (LQAPYKPLEL…KQWSEVATFS (179 aa)) form a domain IV region. One can recognise an EF-hand domain in the interval 621–656 (GHLMSWQATFDKFDEDASGTMNSCELRLALTAAGFH). Asp-634, Asp-636, Ser-638, Thr-640, and Glu-645 together coordinate Ca(2+).

This sequence belongs to the peptidase C2 family. In terms of tissue distribution, expression localized to the cortex of the hair follicle during the anagen phase of hair cycle.

In terms of biological role, calcium-regulated non-lysosomal thiol-protease. The polypeptide is Calpain-12 (Capn12) (Mus musculus (Mouse)).